A 227-amino-acid polypeptide reads, in one-letter code: 3,4-dihydroxy-2-butanone 4-phosphate synthase (227 aa).

Residues 45–46 (RE), aspartate 50, 158–162 (RRGHT), and glutamate 182 contribute to the D-ribulose 5-phosphate site. Mg(2+) is bound at residue glutamate 46. Histidine 161 serves as a coordination point for Mg(2+).

Belongs to the DHBP synthase family. Homodimer. Requires Mg(2+) as cofactor. Mn(2+) is required as a cofactor.

The catalysed reaction is D-ribulose 5-phosphate = (2S)-2-hydroxy-3-oxobutyl phosphate + formate + H(+). It functions in the pathway cofactor biosynthesis; riboflavin biosynthesis; 2-hydroxy-3-oxobutyl phosphate from D-ribulose 5-phosphate: step 1/1. In terms of biological role, catalyzes the conversion of D-ribulose 5-phosphate to formate and 3,4-dihydroxy-2-butanone 4-phosphate. In Ralstonia nicotianae (strain ATCC BAA-1114 / GMI1000) (Ralstonia solanacearum), this protein is 3,4-dihydroxy-2-butanone 4-phosphate synthase.